The primary structure comprises 448 residues: Receptor homology region, transmembrane domain- and RING domain-containing protein 2 (448 aa).

The N-terminal stretch at 1–20 is a signal peptide; the sequence is MNRALVLLLYVCTVSCLASS. Topologically, residues 21–163 are lumenal; that stretch reads KVILMRNNIT…IPSFENSAWS (143 aa). N-linked (GlcNAc...) asparagine glycans are attached at residues N28 and N74. The PA domain maps to 60–144; it reads DACQNLMNKP…ETGEVLKEYA (85 aa). C62 and C87 are disulfide-bonded. The chain crosses the membrane as a helical span at residues 164 to 184; sequence IMAVSFISLLAMSAVLATCFF. Residues 185 to 448 are Cytoplasmic-facing; it reads VRRHRIRRRT…YASANSLPDC (264 aa). Residues 232-274 form an RING-type; atypical zinc finger; the sequence is CAICLEDYTVGDKLRLLPCCHKFHAACVDSWLTSWRTFCPVCK. Low complexity predominate over residues 344–378; that stretch reads QSSSNRRSPPISVSRSSVDLRQQAASPSPSPSQRS. Disordered stretches follow at residues 344–380 and 402–424; these read QSSSNRRSPPISVSRSSVDLRQQAASPSPSPSQRSYI and MSPYRPSPSNASPAMAGSSNYPL. Positions 408-423 are enriched in polar residues; that stretch reads SPSNASPAMAGSSNYP.

Its subcellular location is the protein storage vacuole membrane. It localises to the golgi apparatus membrane. Its function is as follows. Involved in the trafficking of vacuolar proteins. May function as a sorting receptor for protein trafficking to the protein storage vacuole (PSV). The sequence is that of Receptor homology region, transmembrane domain- and RING domain-containing protein 2 (RMR2) from Arabidopsis thaliana (Mouse-ear cress).